Here is a 259-residue protein sequence, read N- to C-terminus: L-arginine-binding protein (259 aa).

An N-terminal signal peptide occupies residues 1–21; it reads MKKLALLGALALSVLSLPTFA.

This sequence belongs to the bacterial solute-binding protein 3 family.

It localises to the periplasm. Functionally, binds L-arginine with high affinity. Shows no measurable affinity for L-ornithine. The chain is L-arginine-binding protein from Pseudomonas aeruginosa (strain ATCC 15692 / DSM 22644 / CIP 104116 / JCM 14847 / LMG 12228 / 1C / PRS 101 / PAO1).